The sequence spans 108 residues: Nucleoid-associated protein Csal_1459 (108 aa).

The span at 84–93 shows a compositional bias: basic and acidic residues; that stretch reads EETSRGRMEE. Residues 84–108 form a disordered region; sequence EETSRGRMEEATEGMNLPPGFKMPF.

Belongs to the YbaB/EbfC family. Homodimer.

Its subcellular location is the cytoplasm. It is found in the nucleoid. In terms of biological role, binds to DNA and alters its conformation. May be involved in regulation of gene expression, nucleoid organization and DNA protection. The chain is Nucleoid-associated protein Csal_1459 from Chromohalobacter salexigens (strain ATCC BAA-138 / DSM 3043 / CIP 106854 / NCIMB 13768 / 1H11).